A 62-amino-acid polypeptide reads, in one-letter code: Photosystem II reaction center protein Z (62 aa).

Transmembrane regions (helical) follow at residues Ala8–Ala28 and Leu41–Val61.

It belongs to the PsbZ family. PSII is composed of 1 copy each of membrane proteins PsbA, PsbB, PsbC, PsbD, PsbE, PsbF, PsbH, PsbI, PsbJ, PsbK, PsbL, PsbM, PsbT, PsbX, PsbY, PsbZ, Psb30/Ycf12, peripheral proteins PsbO, CyanoQ (PsbQ), PsbU, PsbV and a large number of cofactors. It forms dimeric complexes.

The protein resides in the cellular thylakoid membrane. In terms of biological role, may control the interaction of photosystem II (PSII) cores with the light-harvesting antenna, regulates electron flow through the 2 photosystem reaction centers. PSII is a light-driven water plastoquinone oxidoreductase, using light energy to abstract electrons from H(2)O, generating a proton gradient subsequently used for ATP formation. The protein is Photosystem II reaction center protein Z of Synechococcus elongatus (strain ATCC 33912 / PCC 7942 / FACHB-805) (Anacystis nidulans R2).